The following is a 141-amino-acid chain: D-aminoacyl-tRNA deacylase (141 aa).

The Gly-cisPro motif, important for rejection of L-amino acids motif lies at glycine 133–proline 134.

This sequence belongs to the DTD family. As to quaternary structure, homodimer.

The protein localises to the cytoplasm. The catalysed reaction is glycyl-tRNA(Ala) + H2O = tRNA(Ala) + glycine + H(+). The enzyme catalyses a D-aminoacyl-tRNA + H2O = a tRNA + a D-alpha-amino acid + H(+). An aminoacyl-tRNA editing enzyme that deacylates mischarged D-aminoacyl-tRNAs. Also deacylates mischarged glycyl-tRNA(Ala), protecting cells against glycine mischarging by AlaRS. Acts via tRNA-based rather than protein-based catalysis; rejects L-amino acids rather than detecting D-amino acids in the active site. By recycling D-aminoacyl-tRNA to D-amino acids and free tRNA molecules, this enzyme counteracts the toxicity associated with the formation of D-aminoacyl-tRNA entities in vivo and helps enforce protein L-homochirality. This chain is D-aminoacyl-tRNA deacylase, found in Nautilia profundicola (strain ATCC BAA-1463 / DSM 18972 / AmH).